Reading from the N-terminus, the 65-residue chain is Large ribosomal subunit protein bL35 (65 aa).

It belongs to the bacterial ribosomal protein bL35 family.

The polypeptide is Large ribosomal subunit protein bL35 (Caldicellulosiruptor saccharolyticus (strain ATCC 43494 / DSM 8903 / Tp8T 6331)).